Here is a 100-residue protein sequence, read N- to C-terminus: High mobility group protein C (100 aa).

The HMG box DNA-binding region spans P12–E80. The segment at K81–K100 is disordered. Over residues K90–K100 the composition is skewed to basic residues.

Its subcellular location is the nucleus. The protein localises to the chromosome. The polypeptide is High mobility group protein C (Tetrahymena thermophila).